The chain runs to 286 residues: Alpha/beta-gliadin (286 aa).

A signal peptide spans 1–20; it reads MKTFLILVLLAIVATTATTA. The disordered stretch occupies residues 51–120; the sequence is LGQQQPFPPQ…QQPISQQQQQ (70 aa). Residues 56 to 71 are compositionally biased toward pro residues; it reads PFPPQQPYPQPQPFPS. Residues 72-92 show a composition bias toward low complexity; the sequence is QLPYLQLQPFPQPQLPYSQPQ. The span at 93–104 shows a compositional bias: pro residues; the sequence is PFRPQQPYPQPQ. A compositionally biased stretch (low complexity) spans 105-120; it reads PQYSQPQQPISQQQQQ.

This sequence belongs to the gliadin/glutenin family. Substrate of transglutaminase.

Its function is as follows. Gliadin is the major seed storage protein in wheat. The chain is Alpha/beta-gliadin from Triticum aestivum (Wheat).